Here is a 230-residue protein sequence, read N- to C-terminus: Probable fimbrial chaperone SfmC (230 aa).

Residues 1-23 (MMTKIKLLMLIIFYLIISASAHA) form the signal peptide.

Belongs to the periplasmic pilus chaperone family.

Its subcellular location is the periplasm. Its function is as follows. Part of the sfmACDHF fimbrial operon. Could contribute to adhesion to various surfaces in specific environmental niches. Increases adhesion to eukaryotic T24 bladder epithelial cells in the absence of fim genes. The polypeptide is Probable fimbrial chaperone SfmC (sfmC) (Escherichia coli (strain K12)).